A 623-amino-acid chain; its full sequence is E3 ubiquitin-protein ligase DTX1 (623 aa).

2 WWE domains span residues His-13 to Arg-93 and Asn-94 to Arg-170. Residues Lys-224–Ala-319 are disordered. The segment covering Ser-227–His-242 has biased composition (pro residues). The span at Gly-292 to Ala-311 shows a compositional bias: polar residues. An RING-type zinc finger spans residues Cys-413–Lys-474.

The protein belongs to the Deltex family. May form a homo- or heterodimer with other members of the Deltex family. Probably interacts with Notch1. Specifically expressed in regions undergoing neuronal differentiation. Mainly colocalizes with Notch1.

It carries out the reaction S-ubiquitinyl-[E2 ubiquitin-conjugating enzyme]-L-cysteine + [acceptor protein]-L-lysine = [E2 ubiquitin-conjugating enzyme]-L-cysteine + N(6)-ubiquitinyl-[acceptor protein]-L-lysine.. It participates in protein modification; protein ubiquitination. In terms of biological role, regulator of Notch signaling, a signaling pathway involved in cell-cell communications that regulates a broad spectrum of cell-fate determinations. Probably acts both as a positive and negative regulator of Notch, depending on the developmental and cell context. Functions as a ubiquitin ligase protein in vivo, mediating ubiquitination and promoting degradation of MEKK1, suggesting that it may regulate the Notch pathway via some ubiquitin ligase activity. In Xenopus laevis (African clawed frog), this protein is E3 ubiquitin-protein ligase DTX1 (dtx1).